Reading from the N-terminus, the 284-residue chain is Pantothenate synthetase (284 aa).

Residue 30–37 participates in ATP binding; it reads MGALHNGH. Catalysis depends on His37, which acts as the Proton donor. Gln61 is a binding site for (R)-pantoate. Residue Gln61 coordinates beta-alanine. 147-150 contributes to the ATP binding site; that stretch reads GEKD. (R)-pantoate is bound at residue Gln153. ATP-binding positions include Leu176 and 184–187; that span reads SSSR.

It belongs to the pantothenate synthetase family. In terms of assembly, homodimer.

The protein resides in the cytoplasm. The enzyme catalyses (R)-pantoate + beta-alanine + ATP = (R)-pantothenate + AMP + diphosphate + H(+). It participates in cofactor biosynthesis; (R)-pantothenate biosynthesis; (R)-pantothenate from (R)-pantoate and beta-alanine: step 1/1. Catalyzes the condensation of pantoate with beta-alanine in an ATP-dependent reaction via a pantoyl-adenylate intermediate. In Bartonella henselae (strain ATCC 49882 / DSM 28221 / CCUG 30454 / Houston 1) (Rochalimaea henselae), this protein is Pantothenate synthetase.